The chain runs to 1036 residues: Putative GPI-anchored protein pfl2 (1036 aa).

Residues 1 to 23 (MKFFTASTLFLLAAQSLNSGVSA) form the signal peptide. N-linked (GlcNAc...) asparagine glycosylation is found at Asn-66, Asn-97, Asn-165, Asn-201, Asn-233, Asn-259, Asn-277, Asn-296, Asn-312, Asn-331, Asn-347, Asn-363, Asn-379, Asn-395, Asn-410, Asn-429, Asn-445, Asn-461, Asn-477, Asn-493, Asn-509, Asn-524, Asn-543, Asn-559, and Asn-573. Disordered regions lie at residues 88–130 (SSSL…SSLA) and 147–183 (SSLA…SLSS). Over residues 243-585 (SSISSTVSSS…ITSSASGSTG (343 aa)) the composition is skewed to low complexity. Positions 243 to 710 (SSISSTVSSS…PLSNSTVAPT (468 aa)) are disordered. Positions 586-595 (EFTNTNSGNG) are enriched in polar residues. Positions 597–630 (VSGSVTTPTSTPLSNSTVAPTSTFTSSGFNTTSG) are enriched in low complexity. Residues Asn-611, Asn-626, Asn-642, Asn-657, Asn-673, Asn-688, Asn-704, Asn-719, and Asn-735 are each glycosylated (N-linked (GlcNAc...) asparagine). Residues 631 to 647 (LPTSSASTPLSNSTVAP) are compositionally biased toward polar residues. Low complexity predominate over residues 648–692 (TSTFTSSGFNTTSGLPTSSASTPSSNSSIVPTSTFTSSGFNTTSG). Residues 693 to 709 (LPTSSASTPLSNSTVAP) show a composition bias toward polar residues. Low complexity-rich tracts occupy residues 722–831 (SGLP…TTAS), 838–862 (PTAA…ATYT), and 885–906 (IPVN…SFTP). 2 disordered regions span residues 722–862 (SGLP…ATYT) and 885–918 (IPVN…SYSN). 7 N-linked (GlcNAc...) asparagine glycosylation sites follow: Asn-918, Asn-924, Asn-930, Asn-933, Asn-939, Asn-947, and Asn-977. The interval 978–1011 (TTATSGSDDDVKTASTSSSTSYTSSSSSSSSTTS) is disordered. Over residues 990–1011 (TASTSSSTSYTSSSSSSSSTTS) the composition is skewed to low complexity. The GPI-anchor amidated serine moiety is linked to residue Ser-1011. Positions 1012 to 1036 (AASSKASVSMGLNGLMIAAVILLVA) are cleaved as a propeptide — removed in mature form.

The protein localises to the cell membrane. Its function is as follows. May be involved in agglutination during conjugation or other aspects of colony formation. Induces flocculation when overexpressed. The protein is Putative GPI-anchored protein pfl2 of Schizosaccharomyces pombe (strain 972 / ATCC 24843) (Fission yeast).